We begin with the raw amino-acid sequence, 152 residues long: 6,7-dimethyl-8-ribityllumazine synthase (152 aa).

5-amino-6-(D-ribitylamino)uracil-binding positions include Phe22, 54 to 56 (AFE), and 78 to 80 (AVI). 83–84 (ET) provides a ligand contact to (2S)-2-hydroxy-3-oxobutyl phosphate. The active-site Proton donor is the His86. Phe111 contributes to the 5-amino-6-(D-ribitylamino)uracil binding site. Arg125 is a (2S)-2-hydroxy-3-oxobutyl phosphate binding site.

This sequence belongs to the DMRL synthase family.

It carries out the reaction (2S)-2-hydroxy-3-oxobutyl phosphate + 5-amino-6-(D-ribitylamino)uracil = 6,7-dimethyl-8-(1-D-ribityl)lumazine + phosphate + 2 H2O + H(+). It functions in the pathway cofactor biosynthesis; riboflavin biosynthesis; riboflavin from 2-hydroxy-3-oxobutyl phosphate and 5-amino-6-(D-ribitylamino)uracil: step 1/2. Catalyzes the formation of 6,7-dimethyl-8-ribityllumazine by condensation of 5-amino-6-(D-ribitylamino)uracil with 3,4-dihydroxy-2-butanone 4-phosphate. This is the penultimate step in the biosynthesis of riboflavin. The chain is 6,7-dimethyl-8-ribityllumazine synthase from Limosilactobacillus reuteri (strain DSM 20016) (Lactobacillus reuteri).